The sequence spans 129 residues: Large ribosomal subunit protein bL19 (129 aa).

Belongs to the bacterial ribosomal protein bL19 family.

Its function is as follows. This protein is located at the 30S-50S ribosomal subunit interface and may play a role in the structure and function of the aminoacyl-tRNA binding site. The chain is Large ribosomal subunit protein bL19 from Granulibacter bethesdensis (strain ATCC BAA-1260 / CGDNIH1).